The primary structure comprises 320 residues: Beta-ketoacyl-[acyl-carrier-protein] synthase III (320 aa).

Catalysis depends on residues cysteine 114 and histidine 247. Residues 248-252 are ACP-binding; the sequence is QANRR. Asparagine 277 is a catalytic residue.

This sequence belongs to the thiolase-like superfamily. FabH family. As to quaternary structure, homodimer.

The protein resides in the cytoplasm. The enzyme catalyses malonyl-[ACP] + acetyl-CoA + H(+) = 3-oxobutanoyl-[ACP] + CO2 + CoA. The protein operates within lipid metabolism; fatty acid biosynthesis. Catalyzes the condensation reaction of fatty acid synthesis by the addition to an acyl acceptor of two carbons from malonyl-ACP. Catalyzes the first condensation reaction which initiates fatty acid synthesis and may therefore play a role in governing the total rate of fatty acid production. Possesses both acetoacetyl-ACP synthase and acetyl transacylase activities. Its substrate specificity determines the biosynthesis of branched-chain and/or straight-chain of fatty acids. This Neisseria meningitidis serogroup B (strain ATCC BAA-335 / MC58) protein is Beta-ketoacyl-[acyl-carrier-protein] synthase III.